A 72-amino-acid polypeptide reads, in one-letter code: Translation initiation factor IF-1 1 (72 aa).

In terms of domain architecture, S1-like spans 1 to 72; that stretch reads MAKDDVIQMQ…SRARIVFRAK (72 aa).

It belongs to the IF-1 family. As to quaternary structure, component of the 30S ribosomal translation pre-initiation complex which assembles on the 30S ribosome in the order IF-2 and IF-3, IF-1 and N-formylmethionyl-tRNA(fMet); mRNA recruitment can occur at any time during PIC assembly.

The protein resides in the cytoplasm. One of the essential components for the initiation of protein synthesis. Stabilizes the binding of IF-2 and IF-3 on the 30S subunit to which N-formylmethionyl-tRNA(fMet) subsequently binds. Helps modulate mRNA selection, yielding the 30S pre-initiation complex (PIC). Upon addition of the 50S ribosomal subunit IF-1, IF-2 and IF-3 are released leaving the mature 70S translation initiation complex. The sequence is that of Translation initiation factor IF-1 1 from Ralstonia nicotianae (strain ATCC BAA-1114 / GMI1000) (Ralstonia solanacearum).